We begin with the raw amino-acid sequence, 1374 residues long: DNA-directed RNA polymerase subunit beta (1374 aa).

It belongs to the RNA polymerase beta chain family. As to quaternary structure, the RNAP catalytic core consists of 2 alpha, 1 beta, 1 beta' and 1 omega subunit. When a sigma factor is associated with the core the holoenzyme is formed, which can initiate transcription.

It carries out the reaction RNA(n) + a ribonucleoside 5'-triphosphate = RNA(n+1) + diphosphate. In terms of biological role, DNA-dependent RNA polymerase catalyzes the transcription of DNA into RNA using the four ribonucleoside triphosphates as substrates. The chain is DNA-directed RNA polymerase subunit beta from Rhodopseudomonas palustris (strain TIE-1).